The sequence spans 305 residues: Serine/threonine-protein phosphatase PP-X isozyme 2 (305 aa).

Residues Asp51, His53, Asp79, and Asn111 each contribute to the Mn(2+) site. The active-site Proton donor is His112. His161 and His236 together coordinate Mn(2+).

Belongs to the PPP phosphatase family. PP-4 (PP-X) subfamily. It depends on Mn(2+) as a cofactor. Ubiquitous, mostly expressed in root mersitems, flowers, and vascular tissues.

Its subcellular location is the plastid stroma. The catalysed reaction is O-phospho-L-seryl-[protein] + H2O = L-seryl-[protein] + phosphate. It catalyses the reaction O-phospho-L-threonyl-[protein] + H2O = L-threonyl-[protein] + phosphate. This Arabidopsis thaliana (Mouse-ear cress) protein is Serine/threonine-protein phosphatase PP-X isozyme 2 (PPX2).